A 1436-amino-acid polypeptide reads, in one-letter code: Antigen WC1.1 (1436 aa).

The N-terminal stretch at 1-25 is a signal peptide; the sequence is MALGRHLSLRGLCVLLLGTMVGGQA. SRCR domains are found at residues 28–131, 134–234, and 239–340; these read LRLK…VVCS, VRLA…VVCS, and VRLM…VICS. Disulfide bonds link cysteine 66–cysteine 130 and cysteine 97–cysteine 107. A glycan (N-linked (GlcNAc...) asparagine) is linked at asparagine 162. 2 disulfide bridges follow: cysteine 172/cysteine 233 and cysteine 203/cysteine 213. N-linked (GlcNAc...) asparagine glycosylation is found at asparagine 244 and asparagine 256. Intrachain disulfides connect cysteine 265–cysteine 329, cysteine 278–cysteine 339, and cysteine 309–cysteine 319. Residues asparagine 351, asparagine 424, and asparagine 444 are each glycosylated (N-linked (GlcNAc...) asparagine). SRCR domains follow at residues 376 to 476, 481 to 581, 586 to 686, 689 to 789, and 794 to 895; these read LRLV…VICS, LRMV…IWCA, IRLV…VICS, VRLA…VVCS, and VQLM…VICS. 3 disulfide bridges follow: cysteine 401–cysteine 465, cysteine 414–cysteine 475, and cysteine 445–cysteine 455. Residues asparagine 499 and asparagine 531 are each glycosylated (N-linked (GlcNAc...) asparagine). 6 disulfide bridges follow: cysteine 506-cysteine 570, cysteine 519-cysteine 580, cysteine 550-cysteine 560, cysteine 611-cysteine 675, cysteine 624-cysteine 685, and cysteine 655-cysteine 665. N-linked (GlcNAc...) asparagine glycosylation is present at asparagine 717. 2 cysteine pairs are disulfide-bonded: cysteine 727/cysteine 788 and cysteine 758/cysteine 768. Asparagine 799 carries N-linked (GlcNAc...) asparagine glycosylation. Disulfide bonds link cysteine 820–cysteine 884, cysteine 833–cysteine 894, and cysteine 864–cysteine 874. Residues asparagine 897, asparagine 979, and asparagine 999 are each glycosylated (N-linked (GlcNAc...) asparagine). SRCR domains lie at 931-1031, 1036-1136, and 1155-1255; these read LRLV…VICS, LRMV…ISCE, and LRLR…VRCS. Cystine bridges form between cysteine 956–cysteine 1020, cysteine 969–cysteine 1030, and cysteine 1000–cysteine 1010. N-linked (GlcNAc...) asparagine glycans are attached at residues asparagine 1054 and asparagine 1086. Disulfide bonds link cysteine 1061-cysteine 1125, cysteine 1074-cysteine 1135, and cysteine 1105-cysteine 1115. 2 N-linked (GlcNAc...) asparagine glycosylation sites follow: asparagine 1173 and asparagine 1214. 3 disulfide bridges follow: cysteine 1180–cysteine 1244, cysteine 1193–cysteine 1254, and cysteine 1224–cysteine 1234. The interval 1337–1410 is disordered; that stretch reads EGLGSPDQMT…PGEGEESFWL (74 aa). Acidic residues predominate over residues 1348–1358; sequence VPDENYDDAEE. Positions 1384 to 1393 are enriched in polar residues; it reads RSSQTGSFLN. Asparagine 1393 carries an N-linked (GlcNAc...) asparagine glycan.

Expressed on subsets of CD4-CD8- gamma delta T lymphocytes.

It is found in the secreted. In Bos taurus (Bovine), this protein is Antigen WC1.1.